Reading from the N-terminus, the 873-residue chain is F-box only protein 41 (873 aa).

Polar residues predominate over residues 85–97 (ESTSFQGKEQATG). 3 disordered regions span residues 85–110 (ESTS…HHHH), 163–193 (SSAC…SPAD), and 345–540 (SSSC…PSRS). The segment covering 168-178 (TPPPGPGPGPC) has biased composition (pro residues). Residues 179 to 192 (SGPSSASPASPSPA) show a composition bias toward low complexity. Residues 207 to 349 (ALEKLEVDRR…QLQVISSSCG (143 aa)) adopt a coiled-coil conformation. The segment covering 357 to 371 (GRGGGGSASGPGVRG) has biased composition (gly residues). Arginine 358 carries the omega-N-methylarginine modification. 2 stretches are compositionally biased toward polar residues: residues 384 to 414 (VPST…SSGC) and 442 to 456 (AQAT…QAPR). The residue at position 476 (serine 476) is a Phosphoserine. Threonine 477 is modified (phosphothreonine). Residues 548 to 592 (ILKMRAALFCIFTYLDTRTLLHAAEVCRDWRFVARHPAVWTRVLL) enclose the F-box domain. Serine 760 carries the phosphoserine modification.

As to quaternary structure, directly interacts with SKP1 and CUL1.

In terms of biological role, substrate-recognition component of the SCF (SKP1-CUL1-F-box protein)-type E3 ubiquitin ligase complex. In Mus musculus (Mouse), this protein is F-box only protein 41 (Fbxo41).